A 190-amino-acid chain; its full sequence is Acireductone dioxygenase (190 aa).

Fe(2+) contacts are provided by H101, H103, E107, and H145. H101, H103, E107, and H145 together coordinate Ni(2+).

This sequence belongs to the acireductone dioxygenase (ARD) family. As to quaternary structure, monomer. The cofactor is Fe(2+). It depends on Ni(2+) as a cofactor.

It catalyses the reaction 1,2-dihydroxy-5-(methylsulfanyl)pent-1-en-3-one + O2 = 3-(methylsulfanyl)propanoate + CO + formate + 2 H(+). The catalysed reaction is 1,2-dihydroxy-5-(methylsulfanyl)pent-1-en-3-one + O2 = 4-methylsulfanyl-2-oxobutanoate + formate + 2 H(+). The protein operates within amino-acid biosynthesis; L-methionine biosynthesis via salvage pathway; L-methionine from S-methyl-5-thio-alpha-D-ribose 1-phosphate: step 5/6. In terms of biological role, catalyzes 2 different reactions between oxygen and the acireductone 1,2-dihydroxy-3-keto-5-methylthiopentene (DHK-MTPene) depending upon the metal bound in the active site. Fe-containing acireductone dioxygenase (Fe-ARD) produces formate and 2-keto-4-methylthiobutyrate (KMTB), the alpha-ketoacid precursor of methionine in the methionine recycle pathway. Ni-containing acireductone dioxygenase (Ni-ARD) produces methylthiopropionate, carbon monoxide and formate, and does not lie on the methionine recycle pathway. The sequence is that of Acireductone dioxygenase from Saccharopolyspora erythraea (strain ATCC 11635 / DSM 40517 / JCM 4748 / NBRC 13426 / NCIMB 8594 / NRRL 2338).